A 343-amino-acid chain; its full sequence is T-cell immunoglobulin and mucin domain-containing protein 4 (343 aa).

Residues 1-22 (MSKGLLLLWLVTELWWLYLTPA) form the signal peptide. The 106-residue stretch at 23 to 128 (ASEDTIIGFL…WFNDVKKNVR (106 aa)) folds into the Ig-like V-type domain. At 23–279 (ASEDTIIGFL…KSHQINSRQT (257 aa)) the chain is on the extracellular side. Intrachain disulfides connect cysteine 40–cysteine 112, cysteine 53–cysteine 64, and cysteine 59–cysteine 111. The N-linked (GlcNAc...) asparagine glycan is linked to asparagine 220. Positions 239 to 258 (TGSNPGILPSTSQLTTQKTT) are disordered. Residues 248–258 (STSQLTTQKTT) are compositionally biased toward low complexity. Residues 280–300 (ILIIACCVGFVLMVLLFLAFL) traverse the membrane as a helical segment. Residues 301-343 (LRGKVTGANCLQRHKRPDNTEDSDSVLNDMSHGRDDEDGIFTL) are Cytoplasmic-facing. Residues 313–343 (RHKRPDNTEDSDSVLNDMSHGRDDEDGIFTL) form a disordered region. 3 positions are modified to phosphoserine: serine 323, serine 325, and serine 331.

The protein belongs to the immunoglobulin superfamily. TIM family. Homodimer. In terms of tissue distribution, predominantly expressed in lymphoid tissues, such as spleen, lymph nodes, and Peyer patches. Also expressed in fetal liver, salivary gland, and spleen stromal cells, predominantly in the marginal zone and to a lesser extent throughout the white pulp. Not expressed in bone marrow-derived cells. Expressed mainly by antigen presenting cells (APCs) in T- and B-cell areas, but not by T- or B-lymphocytes.

It localises to the membrane. Phosphatidylserine receptor that plays different role in immune response including phagocytosis of apoptotic cells and T-cell regulation. Controls T-cell activation in a bimodal fashion, decreasing the activation of naive T-cells by inducing cell cycle arrest, while increasing proliferation of activated T-cells by activating AKT1 and ERK1/2 phosphorylations and subsequent signaling pathways. Also plays a role in efferocytosis which is the process by which apoptotic cells are removed by phagocytic cells. Mechanistically, promotes the engulfment of apoptotic cells or exogenous particles by securing them to phagocytes through direct binding to phosphatidylserine present on apoptotic cells, while other engulfment receptors such as MERTK efficiently recognize apoptotic cells and mediate their ingestion. Additionally, promotes autophagy process by suppressing NLRP3 inflammasome activity via activation of STK11/PRKAA1 pathway in a phosphatidylserine-dependent mechanism. This chain is T-cell immunoglobulin and mucin domain-containing protein 4 (Timd4), found in Mus musculus (Mouse).